A 132-amino-acid chain; its full sequence is Small ribosomal subunit protein uS11 (132 aa).

Positions 108–132 are disordered; that stretch reads GRIEDVTPVPHDSCRPKGGRRGRRV.

It belongs to the universal ribosomal protein uS11 family. As to quaternary structure, part of the 30S ribosomal subunit.

Located on the platform of the 30S subunit. The chain is Small ribosomal subunit protein uS11 from Methanoregula boonei (strain DSM 21154 / JCM 14090 / 6A8).